The sequence spans 435 residues: Methionine aminopeptidase 2 (435 aa).

Positions 1–87 are disordered; it reads MAAQVADGVA…TQTKPPRVPV (87 aa). The segment covering 10-19 has biased composition (basic and acidic residues); that stretch reads ADLKLDDTKS. Residues 20 to 29 show a composition bias toward polar residues; sequence KPTNGTTQNG. Over residues 32–46 the composition is skewed to acidic residues; that stretch reads EHEDSDDDNEGEEGA. The span at 55–68 shows a compositional bias: basic residues; the sequence is KKKKKRKPRKKKKA. His199 is a binding site for substrate. Residues Asp219, Asp230, and His299 each contribute to the a divalent metal cation site. A substrate-binding site is contributed by His307. 2 residues coordinate a divalent metal cation: Glu332 and Glu427.

Belongs to the peptidase M24A family. Methionine aminopeptidase eukaryotic type 2 subfamily. The cofactor is Co(2+). Requires Zn(2+) as cofactor. Mn(2+) is required as a cofactor. Fe(2+) serves as cofactor.

The protein localises to the cytoplasm. It catalyses the reaction Release of N-terminal amino acids, preferentially methionine, from peptides and arylamides.. Its function is as follows. Cotranslationally removes the N-terminal methionine from nascent proteins. The N-terminal methionine is often cleaved when the second residue in the primary sequence is small and uncharged (Met-Ala-, Cys, Gly, Pro, Ser, Thr, or Val). The sequence is that of Methionine aminopeptidase 2 from Phaeosphaeria nodorum (strain SN15 / ATCC MYA-4574 / FGSC 10173) (Glume blotch fungus).